An 827-amino-acid polypeptide reads, in one-letter code: WD repeat-containing protein 27 (827 aa).

14 WD repeats span residues 3-57 (NPQD…IWNT), 62-101 (HQLL…MWNL), 112-151 (LVPR…MLDI), 155-194 (AVRA…VWDH), 201-237 (YSSS…IFSL), 292-337 (FPVL…LANL), 344-387 (YYKD…VLEI), 502-542 (KPGP…VFDA), 546-584 (GTPA…MWSA), 590-629 (ALLL…RYHI), 646-687 (KLIC…VFDL), 698-740 (EAHS…LWDL), 746-784 (ERHF…VYEM), and 788-826 (TFSH…LFLA).

This Homo sapiens (Human) protein is WD repeat-containing protein 27 (WDR27).